A 156-amino-acid chain; its full sequence is 6,7-dimethyl-8-ribityllumazine synthase (156 aa).

Residues phenylalanine 23, 57–59 (AFE), and 81–83 (AVI) contribute to the 5-amino-6-(D-ribitylamino)uracil site. A (2S)-2-hydroxy-3-oxobutyl phosphate-binding site is contributed by 86–87 (ST). Histidine 89 serves as the catalytic Proton donor. Phenylalanine 114 is a binding site for 5-amino-6-(D-ribitylamino)uracil. Position 128 (arginine 128) interacts with (2S)-2-hydroxy-3-oxobutyl phosphate.

Belongs to the DMRL synthase family.

It carries out the reaction (2S)-2-hydroxy-3-oxobutyl phosphate + 5-amino-6-(D-ribitylamino)uracil = 6,7-dimethyl-8-(1-D-ribityl)lumazine + phosphate + 2 H2O + H(+). The protein operates within cofactor biosynthesis; riboflavin biosynthesis; riboflavin from 2-hydroxy-3-oxobutyl phosphate and 5-amino-6-(D-ribitylamino)uracil: step 1/2. In terms of biological role, catalyzes the formation of 6,7-dimethyl-8-ribityllumazine by condensation of 5-amino-6-(D-ribitylamino)uracil with 3,4-dihydroxy-2-butanone 4-phosphate. This is the penultimate step in the biosynthesis of riboflavin. The sequence is that of 6,7-dimethyl-8-ribityllumazine synthase from Sulfurospirillum multivorans (Dehalospirillum multivorans).